Here is a 354-residue protein sequence, read N- to C-terminus: Ferrochelatase (354 aa).

Fe cation-binding residues include His204 and Glu306.

It belongs to the ferrochelatase family.

The protein resides in the cytoplasm. It carries out the reaction heme b + 2 H(+) = protoporphyrin IX + Fe(2+). Its pathway is porphyrin-containing compound metabolism; protoheme biosynthesis; protoheme from protoporphyrin-IX: step 1/1. Its function is as follows. Catalyzes the ferrous insertion into protoporphyrin IX. In Coxiella burnetii (strain CbuG_Q212) (Coxiella burnetii (strain Q212)), this protein is Ferrochelatase.